The following is a 257-amino-acid chain: Phosphate import ATP-binding protein PstB (257 aa).

An ABC transporter domain is found at 11-252 (IQVRDLNFYY…PAKKQTEDYI (242 aa)). An ATP-binding site is contributed by 43–50 (GPSGCGKS).

It belongs to the ABC transporter superfamily. Phosphate importer (TC 3.A.1.7) family. As to quaternary structure, the complex is composed of two ATP-binding proteins (PstB), two transmembrane proteins (PstC and PstA) and a solute-binding protein (PstS).

The protein resides in the cell inner membrane. It catalyses the reaction phosphate(out) + ATP + H2O = ADP + 2 phosphate(in) + H(+). Part of the ABC transporter complex PstSACB involved in phosphate import. Responsible for energy coupling to the transport system. The chain is Phosphate import ATP-binding protein PstB from Enterobacter cloacae.